We begin with the raw amino-acid sequence, 997 residues long: Protein translocase subunit SecA (997 aa).

Residues Q84, 102-106 (GEGKT), and D582 contribute to the ATP site. Residues 950 to 997 (PYVPVPEAKPEPSEVFGVERKRATPPPQPGLSRAERRRLMRQEKKRKK) form a disordered region. Basic and acidic residues predominate over residues 957–971 (AKPEPSEVFGVERKR). Residues 984–997 (ERRRLMRQEKKRKK) show a composition bias toward basic residues.

It belongs to the SecA family. As to quaternary structure, part of the essential Sec protein translocation apparatus which comprises SecA, SecYEG and auxiliary proteins SecDF. Other proteins may also be involved. Monomer and homodimer.

Its subcellular location is the cell inner membrane. The protein resides in the cytoplasm. It carries out the reaction ATP + H2O + cellular proteinSide 1 = ADP + phosphate + cellular proteinSide 2.. Part of the Sec protein translocase complex. Interacts with the SecYEG preprotein conducting channel. Has a central role in coupling the hydrolysis of ATP to the transfer of proteins into and across the cell membrane, serving as an ATP-driven molecular motor driving the stepwise translocation of polypeptide chains across the membrane. The protein is Protein translocase subunit SecA of Thermus thermophilus (strain ATCC 27634 / DSM 579 / HB8).